A 615-amino-acid chain; its full sequence is Chaperone protein HtpG (615 aa).

Residues 1–335 (MSAEKQTHGF…APDLPLNVSR (335 aa)) are a; substrate-binding. Residues 336-541 (ELLQDYGPVQ…EDQLGPQMRR (206 aa)) are b. Residues 542–615 (MLEAAGQPVP…RMQALLSQSV (74 aa)) form a c region.

This sequence belongs to the heat shock protein 90 family. In terms of assembly, homodimer.

The protein localises to the cytoplasm. Molecular chaperone. Has ATPase activity. This Alcanivorax borkumensis (strain ATCC 700651 / DSM 11573 / NCIMB 13689 / SK2) protein is Chaperone protein HtpG.